We begin with the raw amino-acid sequence, 459 residues long: MTLHIHNTMTRTKEVFEPLDPGHVRLYVCGPTVYDRAHIGNARPVIVFDLLARLLRRLYPQVTYVRNITDVDDKINARASASGRTIGEITEETTRLFHEDMAELGALPPDVEPRATAHIADMVAMIERLIAKGHAYEAEGHVLFSVPSMGAYGSLSGRSMDDMIAGARVEVAPYKRDPADFVLWKPSDASLPGWDSPWGRGRPGWHIECSAMSSRYLGPSFDIHGGGLDLIFPHHENEIAQSVCCNGPGTFARYWMHNGYLMVEGEKMSKSLGNFVTVRDLLDQAPGEAMRLAMLGTHYRQPFDWTAEGLEQARRGLDRLYSALRRVAGIAASPAEVPEGVMAALCDDLNTPKALAEVYDLLGVLNRATTTEEQAKAKGALLAAGALLGLFQADPEVWLCGAGTGEEEGLAARVEDLICQRKAARQARDFARADAIRDELTQAGIVLEDGPNGTTWRKA.

Cysteine 29 contacts Zn(2+). Residues 31-41 carry the 'HIGH' region motif; sequence PTVYDRAHIGN. Residues cysteine 209, histidine 234, and glutamate 238 each coordinate Zn(2+). Residues 267–271 carry the 'KMSKS' region motif; the sequence is KMSKS. Lysine 270 contributes to the ATP binding site.

This sequence belongs to the class-I aminoacyl-tRNA synthetase family. Monomer. Requires Zn(2+) as cofactor.

The protein localises to the cytoplasm. It catalyses the reaction tRNA(Cys) + L-cysteine + ATP = L-cysteinyl-tRNA(Cys) + AMP + diphosphate. In Rhodospirillum rubrum (strain ATCC 11170 / ATH 1.1.1 / DSM 467 / LMG 4362 / NCIMB 8255 / S1), this protein is Cysteine--tRNA ligase.